The sequence spans 126 residues: Tachykinin-3 (126 aa).

The N-terminal stretch at 1 to 20 (MRSTLLFAVILALSSARSLG) is a signal peptide. The propeptide occupies 21–83 (AVCEESQEQV…VGPKESPLPQ (63 aa)). Methionine amide is present on Met-95. Positions 99–126 (NLQPDTPVDINQENIPSFGTFKYPPSVE) are excised as a propeptide. Positions 102 to 126 (PDTPVDINQENIPSFGTFKYPPSVE) are disordered.

This sequence belongs to the tachykinin family.

Its subcellular location is the secreted. In terms of biological role, tachykinins are active peptides which excite neurons, evoke behavioral responses, are potent vasodilators and secretagogues, and contract (directly or indirectly) many smooth muscles. Is a critical central regulator of gonadal function. The chain is Tachykinin-3 (TAC3) from Bos taurus (Bovine).